The sequence spans 313 residues: Protochlorophyllide reductase (313 aa).

Belongs to the short-chain dehydrogenases/reductases (SDR) family. POR subfamily.

It localises to the plastid. Its subcellular location is the chloroplast. It catalyses the reaction chlorophyllide a + NADP(+) = protochlorophyllide a + NADPH + H(+). It functions in the pathway porphyrin-containing compound metabolism; chlorophyll biosynthesis. In terms of biological role, phototransformation of protochlorophyllide (Pchlide) to chlorophyllide (Chlide). This Avena sativa (Oat) protein is Protochlorophyllide reductase.